Consider the following 367-residue polypeptide: Selenoprotein Pa (367 aa).

Positions M1 to A19 are cleaved as a signal peptide. U59 is a non-standard amino acid (selenocysteine). N109 carries an N-linked (GlcNAc...) asparagine glycan. A compositionally biased stretch (basic and acidic residues) spans E191–R220. The tract at residues E191 to V241 is disordered. A compositionally biased stretch (basic residues) spans H221–G237. 16 non-standard amino acids (selenocysteine) are found at residues U267, U273, U279, U290, U292, U294, U310, U320, U322, U336, U338, U346, U353, U355, U362, and U364. The segment at L309–K367 is disordered. The span at K326–U336 shows a compositional bias: basic and acidic residues.

The protein belongs to the selenoprotein P family.

It is found in the secreted. In terms of biological role, might be responsible for some of the extracellular antioxidant defense properties of selenium or might be involved in the transport of selenium. This is Selenoprotein Pa (sepp1a) from Danio rerio (Zebrafish).